Here is a 364-residue protein sequence, read N- to C-terminus: Formate dehydrogenase (364 aa).

Residues Val-93 and Asn-119 each coordinate substrate. Residues 174–175, Asp-195, 230–234, Thr-256, Asp-282, and 311–314 contribute to the NAD(+) site; these read RI, PLHAG, and HYSG.

The protein belongs to the D-isomer specific 2-hydroxyacid dehydrogenase family. FDH subfamily. Homodimer.

It is found in the cytoplasm. The enzyme catalyses formate + NAD(+) = CO2 + NADH. With respect to regulation, cu(2+), Hg and p-chloromercuribenzoate are strong inhibitors of enzyme activity and Ca(2+), Mg(2+), Zn(2+), Mn(2+), Cd(2+) and Sn(2+) have no effect on activity indicating a cysteine residue in the protein is essential for enzyme activity or to maintain the proper structure of the enzyme. Nitrite and nitrate inhibit some enzyme activity, however cyanide, azide, thiocyanate and cyanate are strong inhibitors of the enzymatic reaction. The inhibition of cyanide is competitive with formate and reversible. In terms of biological role, catalyzes the NAD(+)-dependent oxidation of formate to carbon dioxide. Formate oxidation is the final step in the methanol oxidation pathway in methylotrophic microorganisms. Has a role in the detoxification of exogenous formate in non-methylotrophic organisms. The chain is Formate dehydrogenase from Candida boidinii (Yeast).